A 204-amino-acid polypeptide reads, in one-letter code: Methyl-CpG-binding domain-containing protein 1 (204 aa).

Positions Met1–Gly46 are disordered. The segment covering Glu15–Ser24 has biased composition (polar residues). A compositionally biased stretch (basic and acidic residues) spans Lys25–Ala34. A CW-type zinc finger spans residues Gly49 to Tyr104. The MBD-associated domain (MAD) signature appears at Gln58–Cys96. Zn(2+) contacts are provided by Cys59, Cys62, Cys88, and Cys96. In terms of domain architecture, MBD spans Trp110–Val180.

In terms of tissue distribution, mostly expressed in flowers and buds.

The protein localises to the nucleus. In terms of biological role, probable transcriptional regulator. The sequence is that of Methyl-CpG-binding domain-containing protein 1 (MBD1) from Arabidopsis thaliana (Mouse-ear cress).